We begin with the raw amino-acid sequence, 393 residues long: Large ribosomal subunit protein uL2m (393 aa).

The transit peptide at 1–43 directs the protein to the mitochondrion; that stretch reads MLVLGSLRSALSCSSTASLISKRNPCYPYGILCRTLSQSVKLW. The interval 337-393 is disordered; that stretch reads AMNKCDHPHGGGRGKSKSNKLSMSPWGQLAKGYKTRRGKNQNRMKVKDRPRGKDARL. Basic residues predominate over residues 369–380; it reads YKTRRGKNQNRM. Positions 381 to 393 are enriched in basic and acidic residues; sequence KVKDRPRGKDARL.

Belongs to the universal ribosomal protein uL2 family. Component of the mitochondrial large ribosomal subunit (mt-LSU). Mature yeast 74S mitochondrial ribosomes consist of a small (37S) and a large (54S) subunit. The 37S small subunit contains a 15S ribosomal RNA (15S mt-rRNA) and 34 different proteins. The 54S large subunit contains a 21S rRNA (21S mt-rRNA) and 46 different proteins. uL2m has a Na/K ligand binding site.

It localises to the mitochondrion. Component of the mitochondrial ribosome (mitoribosome), a dedicated translation machinery responsible for the synthesis of mitochondrial genome-encoded proteins, including at least some of the essential transmembrane subunits of the mitochondrial respiratory chain. The mitoribosomes are attached to the mitochondrial inner membrane and translation products are cotranslationally integrated into the membrane. This is Large ribosomal subunit protein uL2m (RML2) from Saccharomyces cerevisiae (strain ATCC 204508 / S288c) (Baker's yeast).